The sequence spans 738 residues: Catalase-peroxidase (738 aa).

Positions 1 to 13 (MDGQDIGAGGGCP) are enriched in gly residues. The tract at residues 1–26 (MDGQDIGAGGGCPFSGANTNKGRRSN) is disordered. The tryptophyl-tyrosyl-methioninium (Trp-Tyr) (with M-252) cross-link spans 98-226 (WHSAGTYRTA…LAAVQMGLIY (129 aa)). Catalysis depends on H99, which acts as the Proton acceptor. The segment at residues 226 to 252 (YVNPEGPDGNPDPIASGRDIRETFARM) is a cross-link (tryptophyl-tyrosyl-methioninium (Tyr-Met) (with W-98)). Position 267 (H267) interacts with heme b.

Belongs to the peroxidase family. Peroxidase/catalase subfamily. Homodimer or homotetramer. It depends on heme b as a cofactor. Formation of the three residue Trp-Tyr-Met cross-link is important for the catalase, but not the peroxidase activity of the enzyme.

It catalyses the reaction H2O2 + AH2 = A + 2 H2O. The enzyme catalyses 2 H2O2 = O2 + 2 H2O. Its function is as follows. Bifunctional enzyme with both catalase and broad-spectrum peroxidase activity. In Ruegeria sp. (strain TM1040) (Silicibacter sp.), this protein is Catalase-peroxidase.